We begin with the raw amino-acid sequence, 668 residues long: Protein IQ-DOMAIN 14 (668 aa).

Residues 1–11 form a calmodulin-binding region; it reads MVKKGSWFSAI. Disordered stretches follow at residues 16–54 and 66–305; these read TPHS…FLPI and GEAE…PRAV. Residues 18 to 31 show a composition bias toward basic and acidic residues; it reads HSKEKLANEPERKS. The span at 32–43 shows a compositional bias: basic residues; sequence GKEKKKKGFGKL. A compositionally biased stretch (pro residues) spans 78-96; the sequence is PPTPDRPNPYSASPPPRPA. Composition is skewed to low complexity over residues 97–120 and 166–175; these read SPRV…SPRA and PSSASANAPP. The segment covering 269–279 has biased composition (pro residues); that stretch reads PTTPKPPSPRS. IQ domains follow at residues 321–350 and 343–372; these read QHAS…LVRL and ALKG…YMQQ. 2 disordered regions span residues 399–431 and 476–561; these read AKWA…KTDA and SPAP…SLTS. A compositionally biased stretch (basic and acidic residues) spans 415 to 431; that stretch reads VLTKEERDSRSQRKTDA. Residues 516-529 are compositionally biased toward polar residues; it reads DTSTPRSSRSTFHT.

Belongs to the IQD family. In terms of assembly, binds to multiple calmodulin (CaM) in the presence of Ca(2+) and CaM-like proteins. Expressed in hypocotyls, cotyledons, leaves and petioles.

The protein localises to the cell membrane. It is found in the cytoplasm. It localises to the cytoskeleton. Its function is as follows. May be involved in cooperative interactions with calmodulins or calmodulin-like proteins. Recruits calmodulin proteins to microtubules, thus being a potential scaffold in cellular signaling and trafficking. Regulates cell and organ shapes (prevents twisting) in aerial parts probably by regulating transverse microtubules (MT) arrays alignment. Regulates the formation of oval xylem secondary cell-wall deposition pits through microtubule-dependent lateral inhibition of Rho GTPase domains, thus confining the area of active ROP domains within the lattice of the cortical microtubules. May associate with nucleic acids and regulate gene expression at the transcriptional or post-transcriptional level. This Arabidopsis thaliana (Mouse-ear cress) protein is Protein IQ-DOMAIN 14.